We begin with the raw amino-acid sequence, 244 residues long: Derlin-2.2 (244 aa).

Residues 1–21 lie on the Cytoplasmic side of the membrane; it reads MAQAVEEWYKQMPIITRSYLT. Residues 22–42 form a helical membrane-spanning segment; sequence AAVITTVGCSLDIISPYNLYL. At 43 to 96 the chain is on the lumenal side; that stretch reads NPTLVVKQYQYWRLVTNFLYFRKMDLDFMFHMFFLARYCKLLEENSFRGKTADF. Residues 97–117 form a helical membrane-spanning segment; that stretch reads LYMLLFGASVLTGIVLIGGMI. The Cytoplasmic portion of the chain corresponds to 118-121; that stretch reads PYLS. The helical transmembrane segment at 122-142 threads the bilayer; the sequence is ASFAKIIFLSNSLTFMMVYVW. Over 143-152 the chain is Lumenal; sequence SKQNPYIHMS. A helical membrane pass occupies residues 153–173; that stretch reads FLGLFTFTAAYLPWVLLGFSI. Topologically, residues 174-244 are cytoplasmic; sequence LVGASAWVDL…AAPFDEIHQD (71 aa).

This sequence belongs to the derlin family.

It is found in the endoplasmic reticulum membrane. In terms of biological role, may be involved in the degradation process of specific misfolded endoplasmic reticulum (ER) luminal proteins. The sequence is that of Derlin-2.2 (DER2.2) from Arabidopsis thaliana (Mouse-ear cress).